Reading from the N-terminus, the 243-residue chain is Voltage-gated monoatomic cation channel TMEM109 (243 aa).

The N-terminal stretch at 1-33 (MAGAHSNPSWSRHLFKAVLMVLGALLLVHSASA) is a signal peptide. Over 34–83 (QTHREFASPGQQKRESSADILTEIGRSLKETLDTWLGPETMHVISETLLQ) the chain is Lumenal. The chain crosses the membrane as a helical span at residues 84–104 (VMWAISSAISVACFALSGIAA). Residues 105 to 135 (QLLSALGLDGEQLTQVLKLSPSQVQTLLLWG) lie on the Cytoplasmic side of the membrane. A helical transmembrane segment spans residues 136-156 (AAALVIYWLLSLLLGLVLALL). Residues 157–185 (GRILGGLKLVLFVAGFVGLVRSVPDPSTR) are Lumenal-facing. A helical transmembrane segment spans residues 186-205 (ALLLLALLTVFALLSRLTGS). At 206–243 (RSSGTHLEAKVRGLERQIEELRGRQRRAAKIPRSMEEE) the chain is on the cytoplasmic side.

In terms of assembly, homooligomer. Interacts with CRYAB; in the cellular response to DNA damage.

It localises to the nucleus outer membrane. The protein resides in the endoplasmic reticulum membrane. The protein localises to the sarcoplasmic reticulum membrane. It catalyses the reaction K(+)(in) = K(+)(out). The enzyme catalyses Ca(2+)(in) = Ca(2+)(out). Its function is as follows. Functions as a voltage-gated monoatomic cation channel permeable to both potassium and calcium. Plays a role in the cellular response to DNA damage. This chain is Voltage-gated monoatomic cation channel TMEM109, found in Rattus norvegicus (Rat).